Consider the following 363-residue polypeptide: Chorismate synthase (363 aa).

NADP(+) is bound by residues arginine 48 and arginine 54. FMN contacts are provided by residues arginine 125–serine 127, asparagine 237–alanine 238, glycine 277, lysine 292–serine 296, and arginine 318.

Belongs to the chorismate synthase family. In terms of assembly, homotetramer. FMNH2 is required as a cofactor.

It carries out the reaction 5-O-(1-carboxyvinyl)-3-phosphoshikimate = chorismate + phosphate. It functions in the pathway metabolic intermediate biosynthesis; chorismate biosynthesis; chorismate from D-erythrose 4-phosphate and phosphoenolpyruvate: step 7/7. In terms of biological role, catalyzes the anti-1,4-elimination of the C-3 phosphate and the C-6 proR hydrogen from 5-enolpyruvylshikimate-3-phosphate (EPSP) to yield chorismate, which is the branch point compound that serves as the starting substrate for the three terminal pathways of aromatic amino acid biosynthesis. This reaction introduces a second double bond into the aromatic ring system. This is Chorismate synthase from Pseudomonas syringae pv. syringae (strain B728a).